A 1488-amino-acid chain; its full sequence is WD repeat-containing protein 7 (1488 aa).

WD repeat units lie at residues 17–56 (APTH…EVNP), 62–104 (GHTA…CIEF), 156–199 (ISPD…SGLQ), 324–366 (VICP…DKQE), 404–443 (NEPL…IVQL), 462–507 (GHRN…MKHI), and 558–597 (RHLF…LDRC). Disordered stretches follow at residues 761 to 781 (EEED…PEYR) and 911 to 947 (GDHM…QGQI). Residues 768–781 (VMRQRREESDPEYR) show a composition bias toward basic and acidic residues. Residue S935 is modified to Phosphoserine. The segment covering 937–947 (PASSNIVQGQI) has biased composition (polar residues). WD repeat units lie at residues 1349 to 1388 (PAIC…CQTI) and 1390 to 1430 (GHKG…LGSI). Residue S1454 is modified to Phosphoserine.

This chain is WD repeat-containing protein 7 (Wdr7), found in Rattus norvegicus (Rat).